A 130-amino-acid polypeptide reads, in one-letter code: Histone H2B.2 (130 aa).

Over residues 1–19 (MAPKAEKKPASKAPAEKKP) the composition is skewed to basic and acidic residues. Residues 1-38 (MAPKAEKKPASKAPAEKKPAAKKTASTDGAKKRTKARK) form a disordered region. An N6-acetyllysine; alternate mark is found at Lys-7 and Lys-8. Residues Lys-7 and Lys-8 each participate in a glycyl lysine isopeptide (Lys-Gly) (interchain with G-Cter in SUMO); alternate cross-link. Position 11 is a phosphoserine (Ser-11). Lys-12 bears the N6-acetyllysine mark. An N6-acetyllysine; alternate modification is found at Lys-17. Residue Lys-17 forms a Glycyl lysine isopeptide (Lys-Gly) (interchain with G-Cter in SUMO); alternate linkage. A Glycyl lysine isopeptide (Lys-Gly) (interchain with G-Cter in SUMO) cross-link involves residue Lys-18. Residue Lys-124 forms a Glycyl lysine isopeptide (Lys-Gly) (interchain with G-Cter in ubiquitin) linkage.

The protein belongs to the histone H2B family. As to quaternary structure, the nucleosome is a histone octamer containing two molecules each of H2A, H2B, H3 and H4 assembled in one H3-H4 heterotetramer and two H2A-H2B heterodimers. The octamer wraps approximately 147 bp of DNA. Monoubiquitinated by the UBC2-BRE1 complex to form H2BK123ub1. H2BK123ub1 gives a specific tag for epigenetic transcriptional activation and is also prerequisite for H3K4me and H3K79me formation. H2BK123ub1 also modulates the formation of double-strand breaks during meiosis and is a prerequisite for DNA-damage checkpoint activation. Post-translationally, phosphorylated by STE20 to form H2BS10ph during progression through meiotic prophase. May be correlated with chromosome condensation. In terms of processing, acetylated by GCN5 to form H2BK11ac and H2BK16ac. H2BK16ac can also be formed by ESA1. Acetylation of N-terminal lysines and particularly formation of H2BK11acK16ac has a positive effect on transcription. Sumoylation to form H2BK6su or H2BK7su, and probably also H2BK16su or H2BK17su, occurs preferentially near the telomeres and represses gene transcription.

It localises to the nucleus. The protein localises to the chromosome. Its function is as follows. Core component of nucleosome. Nucleosomes wrap and compact DNA into chromatin, limiting DNA accessibility to the cellular machineries which require DNA as a template. Histones thereby play a central role in transcription regulation, DNA repair, DNA replication and chromosomal stability. DNA accessibility is regulated via a complex set of post-translational modifications of histones, also called histone code, and nucleosome remodeling. This is Histone H2B.2 (HTB2) from Candida albicans (strain SC5314 / ATCC MYA-2876) (Yeast).